Here is a 160-residue protein sequence, read N- to C-terminus: Non-secretory ribonuclease (160 aa).

The first 27 residues, 1–27, serve as a signal peptide directing secretion; it reads MVPKLFTSPICLLLLLGLMGVEGSLHA. Trp-34 carries C-linked (Man) tryptophan glycosylation. Residue His-42 is the Proton acceptor of the active site. An N-linked (GlcNAc...) asparagine glycan is attached at Asn-44. Disulfide bonds link Cys-50/Cys-110, Cys-64/Cys-122, Cys-82/Cys-137, and Cys-89/Cys-98. Position 60 is a 3'-nitrotyrosine (Tyr-60). 65–69 is a binding site for substrate; it reads KNQNT. Asn-92, Asn-111, Asn-118, and Asn-138 each carry an N-linked (GlcNAc...) asparagine glycan. The active-site Proton donor is the His-155.

Belongs to the pancreatic ribonuclease family. In terms of assembly, interacts with and forms a tight 1:1 complex with RNH1. Dimerization of two such complexes may occur.

It localises to the lysosome. The protein localises to the cytoplasmic granule. The enzyme catalyses an [RNA] containing cytidine + H2O = an [RNA]-3'-cytidine-3'-phosphate + a 5'-hydroxy-ribonucleotide-3'-[RNA].. It catalyses the reaction an [RNA] containing uridine + H2O = an [RNA]-3'-uridine-3'-phosphate + a 5'-hydroxy-ribonucleotide-3'-[RNA].. In terms of biological role, this is a non-secretory ribonuclease. It is a pyrimidine specific nuclease with a slight preference for U. Cytotoxin and helminthotoxin. Possesses a wide variety of biological activities. The sequence is that of Non-secretory ribonuclease (RNASE2) from Chlorocebus aethiops (Green monkey).